The sequence spans 233 residues: Phosphoglycolate phosphatase (233 aa).

The active-site Nucleophile is Asp-13. 3 residues coordinate Mg(2+): Asp-13, Asp-15, and Asp-175.

This sequence belongs to the HAD-like hydrolase superfamily. CbbY/CbbZ/Gph/YieH family. Requires Mg(2+) as cofactor.

The catalysed reaction is 2-phosphoglycolate + H2O = glycolate + phosphate. The protein operates within organic acid metabolism; glycolate biosynthesis; glycolate from 2-phosphoglycolate: step 1/1. Its function is as follows. Specifically catalyzes the dephosphorylation of 2-phosphoglycolate. Is involved in the dissimilation of the intracellular 2-phosphoglycolate formed during the DNA repair of 3'-phosphoglycolate ends, a major class of DNA lesions induced by oxidative stress. The polypeptide is Phosphoglycolate phosphatase (Agrobacterium fabrum (strain C58 / ATCC 33970) (Agrobacterium tumefaciens (strain C58))).